Consider the following 477-residue polypeptide: MNFETVIGLEVHVELSTNSKIFSPASTKFGGDPNSNTNVIDWSLPGVLPVMNKGVIDSGIKAALALNMDIHKSMHFDRKNYFYPDNPKAYQISQFDEPIGYNGSIEIELEDGHKATIRIERAHLEEDAGKNTHGTDGYSYVDLNRQGVPLIEIVSEADMRTPEEAYAYLTALKEAILYTGISDVKMEEGSMRCDANVSLRPYGQEAFGVKTEVKNMNSFSNVKKALDFEVARQAKILRAGGEIRQETRRFNDKTGETILMRVKEGASDYRYFPEPDVPRFEISDEWIEQMRESLPMTATARRAHYINDLGLSDYDARQLTATKEVSDFFDQAIKFDTDPKLVSNWLQGEVAQYLNSEKKELHEIGLTPENLTEMIRLISDGTISSKIAKKVFIELAKNGGSAEEFVKKAGLVQISDPDLLLPIIHEVFAKNEQSVADYRGGKQNAAKALVGQLMKATKGQANPTVAQKLLYQELDNF.

The protein belongs to the GatB/GatE family. GatB subfamily. Heterotrimer of A, B and C subunits.

The catalysed reaction is L-glutamyl-tRNA(Gln) + L-glutamine + ATP + H2O = L-glutaminyl-tRNA(Gln) + L-glutamate + ADP + phosphate + H(+). It carries out the reaction L-aspartyl-tRNA(Asn) + L-glutamine + ATP + H2O = L-asparaginyl-tRNA(Asn) + L-glutamate + ADP + phosphate + 2 H(+). Allows the formation of correctly charged Asn-tRNA(Asn) or Gln-tRNA(Gln) through the transamidation of misacylated Asp-tRNA(Asn) or Glu-tRNA(Gln) in organisms which lack either or both of asparaginyl-tRNA or glutaminyl-tRNA synthetases. The reaction takes place in the presence of glutamine and ATP through an activated phospho-Asp-tRNA(Asn) or phospho-Glu-tRNA(Gln). The sequence is that of Aspartyl/glutamyl-tRNA(Asn/Gln) amidotransferase subunit B from Lactococcus lactis subsp. cremoris (strain SK11).